Consider the following 160-residue polypeptide: Phosphopantetheine adenylyltransferase (160 aa).

T10 lines the substrate pocket. ATP is bound by residues 10 to 11 (TF) and H18. The substrate site is built by K42, M74, and R88. ATP contacts are provided by residues 89 to 91 (GLR), E99, and 124 to 130 (LSFLSSS).

Belongs to the bacterial CoaD family. In terms of assembly, homohexamer. Mg(2+) is required as a cofactor.

Its subcellular location is the cytoplasm. It carries out the reaction (R)-4'-phosphopantetheine + ATP + H(+) = 3'-dephospho-CoA + diphosphate. Its pathway is cofactor biosynthesis; coenzyme A biosynthesis; CoA from (R)-pantothenate: step 4/5. Functionally, reversibly transfers an adenylyl group from ATP to 4'-phosphopantetheine, yielding dephospho-CoA (dPCoA) and pyrophosphate. This Photorhabdus laumondii subsp. laumondii (strain DSM 15139 / CIP 105565 / TT01) (Photorhabdus luminescens subsp. laumondii) protein is Phosphopantetheine adenylyltransferase.